Consider the following 160-residue polypeptide: SsrA-binding protein (160 aa).

Residues 134–160 are disordered; the sequence is YDKRDTERERDSNRELHRAVRNKGKED.

The protein belongs to the SmpB family.

The protein localises to the cytoplasm. Functionally, required for rescue of stalled ribosomes mediated by trans-translation. Binds to transfer-messenger RNA (tmRNA), required for stable association of tmRNA with ribosomes. tmRNA and SmpB together mimic tRNA shape, replacing the anticodon stem-loop with SmpB. tmRNA is encoded by the ssrA gene; the 2 termini fold to resemble tRNA(Ala) and it encodes a 'tag peptide', a short internal open reading frame. During trans-translation Ala-aminoacylated tmRNA acts like a tRNA, entering the A-site of stalled ribosomes, displacing the stalled mRNA. The ribosome then switches to translate the ORF on the tmRNA; the nascent peptide is terminated with the 'tag peptide' encoded by the tmRNA and targeted for degradation. The ribosome is freed to recommence translation, which seems to be the essential function of trans-translation. The sequence is that of SsrA-binding protein from Pseudomonas fluorescens (strain SBW25).